The chain runs to 300 residues: ClpXP adapter protein SpxH (300 aa).

The protein belongs to the SpxH family. Interacts with Spx.

It localises to the cytoplasm. Its function is as follows. Adapter protein required for efficient degradation of Spx by ClpXP under non-stress conditions. Interaction with Spx stabilizes Spx and exposes the C-terminus of Spx for recognition and proteolysis by ClpXP. This chain is ClpXP adapter protein SpxH, found in Bacillus licheniformis (strain ATCC 14580 / DSM 13 / JCM 2505 / CCUG 7422 / NBRC 12200 / NCIMB 9375 / NCTC 10341 / NRRL NRS-1264 / Gibson 46).